The chain runs to 288 residues: MERPQPDSMPQDLSEALKEATKEVHTQAENAEFMRNFQKGQVTREGFKLVMASLYHIYVALEEEIEHNKESPVFAPVYFPEELHRKAALEQDLAFWYGPRWQEVIPYTPAMQRYVKRLHEVGRTEPELLVAHAYTRYLGDLSGGQVLKKIAQKALGLPSSGEGLAFFTFPNIASATKFKQLYRSRMNSLEMTPAVRQRVIEEAKTAFLLNIQLFEELQELLTHDTKDQSPSRAPGLRQRASNKAQDSAPVETPRGKTPLNTHSQAPLLRWVLTLSFLVATVAVGLYAM.

Topologically, residues 1 to 265 are cytoplasmic; it reads MERPQPDSMP…KTPLNTHSQA (265 aa). 4 residues coordinate heme b: Lys-18, His-25, Tyr-134, and Arg-183. The segment at 223 to 260 is disordered; the sequence is HDTKDQSPSRAPGLRQRASNKAQDSAPVETPRGKTPLN. Ser-229 is modified (phosphoserine). The chain crosses the membrane as a helical; Anchor for type IV membrane protein span at residues 266–288; the sequence is PLLRWVLTLSFLVATVAVGLYAM.

This sequence belongs to the heme oxygenase family. As to quaternary structure, homodimer and higher order homooligomer. Oligomerization is crucial for its stability and function in the endoplasmic reticulum. Interacts with FLVCR2; this interaction is potentiated in the presence of heme. In terms of processing, a soluble form arises by proteolytic removal of the membrane anchor.

It is found in the endoplasmic reticulum membrane. The catalysed reaction is heme b + 3 reduced [NADPH--hemoprotein reductase] + 3 O2 = biliverdin IXalpha + CO + Fe(2+) + 3 oxidized [NADPH--hemoprotein reductase] + 3 H2O + H(+). Its function is as follows. Catalyzes the oxidative cleavage of heme at the alpha-methene bridge carbon, released as carbon monoxide (CO), to generate biliverdin IXalpha, while releasing the central heme iron chelate as ferrous iron. Affords protection against programmed cell death and this cytoprotective effect relies on its ability to catabolize free heme and prevent it from sensitizing cells to undergo apoptosis. Catalyzes the oxidative cleavage of heme at the alpha-methene bridge carbon, released as carbon monoxide (CO), to generate biliverdin IXalpha, while releasing the central heme iron chelate as ferrous iron. This is Heme oxygenase 1 (HMOX1) from Pongo abelii (Sumatran orangutan).